Reading from the N-terminus, the 601-residue chain is Urocanate hydratase (601 aa).

NAD(+)-binding positions include 63-64 and Q141; that span reads GG. An insert region spans residues 172 to 201; it reads SDRPSALLKQGLSPEGTAPGSGRSSAQVPG. A disordered region spans residues 179–200; that stretch reads LKQGLSPEGTAPGSGRSSAQVP. Residues 216 to 218, E236, 282 to 283, 307 to 311, 317 to 318, and Y368 contribute to the NAD(+) site; these read GMG, NA, QTSAH, and YL. Residue C456 is part of the active site. An NAD(+)-binding site is contributed by G538.

The protein belongs to the urocanase family. NAD(+) is required as a cofactor.

It localises to the cytoplasm. It catalyses the reaction 4-imidazolone-5-propanoate = trans-urocanate + H2O. It participates in amino-acid degradation; L-histidine degradation into L-glutamate; N-formimidoyl-L-glutamate from L-histidine: step 2/3. Its function is as follows. Catalyzes the conversion of urocanate to 4-imidazolone-5-propionate. This chain is Urocanate hydratase, found in Ralstonia nicotianae (strain ATCC BAA-1114 / GMI1000) (Ralstonia solanacearum).